The following is a 317-amino-acid chain: Protease 7 (317 aa).

Positions Met1–Ala20 are cleaved as a signal peptide. Residues Ser21 to Asn31 lie on the Periplasmic side of the membrane. The chain crosses the membrane as a beta stranded span at residues Ile32–Leu41. The Extracellular segment spans residues Ser42–Ala69. Residues Ala70–Trp78 form a beta stranded membrane-spanning segment. Residues Asp79–Gln83 lie on the Periplasmic side of the membrane. The beta stranded transmembrane segment at Ile84 to Thr92 threads the bilayer. Over Thr93–Asn130 the chain is Extracellular. Catalysis depends on residues Asp103 and Asp105. A beta stranded membrane pass occupies residues Glu131 to Leu140. Topologically, residues Leu141–Asn145 are periplasmic. Residues Tyr146 to Glu156 form a beta stranded membrane-spanning segment. At Ser157 to Lys197 the chain is on the extracellular side. The beta stranded transmembrane segment at Met198–Tyr209 threads the bilayer. The Periplasmic segment spans residues Glu210–Asp211. A beta stranded membrane pass occupies residues Phe212 to Ser221. The Extracellular portion of the chain corresponds to Gly222 to Tyr250. Residues Asp230 and His232 contribute to the active site. The beta stranded transmembrane segment at Tyr251–Val261 threads the bilayer. Residues Thr262–Asn264 lie on the Periplasmic side of the membrane. Residues Ala265–Asn274 form a beta stranded membrane-spanning segment. Over Arg275–Asn306 the chain is Extracellular. Residues Phe307–Thr316 form a beta stranded membrane-spanning segment. Position 317 (Phe317) is a topological domain, periplasmic.

It belongs to the peptidase A26 family. As to quaternary structure, homopentamer.

The protein resides in the cell outer membrane. It catalyses the reaction Has a virtual requirement for Arg in the P1 position and a slightly less stringent preference for this residue in the P1' position, which can also contain Lys, Gly or Val.. Its activity is regulated as follows. Inhibited by zinc. Protease that can cleave T7 RNA polymerase, ferric enterobactin receptor protein (FEP), antimicrobial peptide protamine and other proteins. This protease has a specificity for paired basic residues. The polypeptide is Protease 7 (ompT) (Escherichia coli O157:H7).